We begin with the raw amino-acid sequence, 149 residues long: Transcriptional repressor NrdR (149 aa).

Residues 3 to 34 (CPFCGTQDTKVIDSRLVADGASVRRRRECNHC) fold into a zinc finger. The region spanning 49–139 (PRVIKTDGSR…VYRSFEDIRE (91 aa)) is the ATP-cone domain.

The protein belongs to the NrdR family. Zn(2+) is required as a cofactor.

Functionally, negatively regulates transcription of bacterial ribonucleotide reductase nrd genes and operons by binding to NrdR-boxes. The chain is Transcriptional repressor NrdR from Idiomarina loihiensis (strain ATCC BAA-735 / DSM 15497 / L2-TR).